Here is a 178-residue protein sequence, read N- to C-terminus: Stathmin-2-B (178 aa).

Residues 38–178 enclose the SLD domain; it reads DDMEVKQLNK…KNKEQLELSG (141 aa). The stretch at 75–178 forms a coiled coil; that stretch reads KRKDVSLEEI…KNKEQLELSG (104 aa).

Belongs to the stathmin family. As to expression, nervous tissue.

The protein resides in the cytoplasm. It is found in the membrane. It localises to the cell projection. Its subcellular location is the lamellipodium. In Xenopus laevis (African clawed frog), this protein is Stathmin-2-B (stmn2-b).